The chain runs to 469 residues: Mitochondrial distribution and morphology protein 10 (469 aa).

This sequence belongs to the MDM10 family. Component of the ER-mitochondria encounter structure (ERMES) or MDM complex, composed of MMM1, MDM10, MDM12 and MDM34. Associates with the mitochondrial outer membrane sorting assembly machinery SAM(core) complex.

The protein resides in the mitochondrion outer membrane. In terms of biological role, component of the ERMES/MDM complex, which serves as a molecular tether to connect the endoplasmic reticulum and mitochondria. Components of this complex are involved in the control of mitochondrial shape and protein biogenesis and may function in phospholipid exchange. MDM10 is involved in the late assembly steps of the general translocase of the mitochondrial outer membrane (TOM complex). Functions in the TOM40-specific route of the assembly of outer membrane beta-barrel proteins, including the association of TOM40 with the receptor TOM22 and small TOM proteins. Can associate with the SAM(core) complex as well as the MDM12-MMM1 complex, both involved in late steps of the major beta-barrel assembly pathway, that is responsible for biogenesis of all outer membrane beta-barrel proteins. May act as a switch that shuttles between both complexes and channels precursor proteins into the TOM40-specific pathway. Plays a role in mitochondrial morphology and in the inheritance of mitochondria. In Scheffersomyces stipitis (strain ATCC 58785 / CBS 6054 / NBRC 10063 / NRRL Y-11545) (Yeast), this protein is Mitochondrial distribution and morphology protein 10.